We begin with the raw amino-acid sequence, 416 residues long: Serine/threonine-protein kinase 26 (416 aa).

Ala2 is modified (N-acetylalanine). A Phosphoserine modification is found at Ser4. In terms of domain architecture, Protein kinase spans 24–274; that stretch reads FTKLERIGKG…AKELLKHKFI (251 aa). ATP is bound by residues 30–38 and Lys53; that span reads IGKGSFGEV. Catalysis depends on Asp144, which acts as the Proton acceptor. Thr178 is modified (phosphothreonine; by autocatalysis). The interval 297–340 is disordered; that stretch reads EGHSDDESDSEGSDSESTSRENNTHPEWSFTTVRKKPDPKKVQN. Phosphoserine is present on residues Ser300, Ser304, Ser306, Ser309, and Ser325. Residues Thr327 and Thr328 each carry the phosphothreonine modification.

This sequence belongs to the protein kinase superfamily. STE Ser/Thr protein kinase family. STE20 subfamily. In terms of assembly, homodimer. Interacts with PDCD10. Interacts with GOLGA2. Interacts with CTTNBP2NL. Interacts with RIPOR1 (via C-terminus); this interaction occurs in a PDCD10-dependent and Rho-independent manner. Interacts with PDCD10; this interaction is required for the association of STK26 with RIPOR1. Part of the core of STRIPAK complexes composed of PP2A catalytic and scaffolding subunits, the striatins (PP2A regulatory subunits), the striatin-associated proteins MOB4, STRIP1 and STRIP2, PDCD10 and members of the STE20 kinases, such as STK24 and STK26. Mg(2+) serves as cofactor.

It is found in the cytoplasm. The protein resides in the golgi apparatus. The catalysed reaction is L-seryl-[protein] + ATP = O-phospho-L-seryl-[protein] + ADP + H(+). It carries out the reaction L-threonyl-[protein] + ATP = O-phospho-L-threonyl-[protein] + ADP + H(+). Its activity is regulated as follows. Interaction with Golgi matrix protein GOLGA2 leads to autophosphorylation on Thr-178, possibly as a consequence of stabilization of dimer formation. May also be activated by C-terminal cleavage. Its function is as follows. Serine/threonine-protein kinase that acts as a mediator of cell growth. Modulates apoptosis. In association with STK24 negatively regulates Golgi reorientation in polarized cell migration upon RHO activation. Phosphorylates ATG4B at 'Ser-383', thereby increasing autophagic flux. Part of the striatin-interacting phosphatase and kinase (STRIPAK) complexes. STRIPAK complexes have critical roles in protein (de)phosphorylation and are regulators of multiple signaling pathways including Hippo, MAPK, nuclear receptor and cytoskeleton remodeling. Different types of STRIPAK complexes are involved in a variety of biological processes such as cell growth, differentiation, apoptosis, metabolism and immune regulation. In Homo sapiens (Human), this protein is Serine/threonine-protein kinase 26.